Reading from the N-terminus, the 361-residue chain is Large ribosomal subunit protein uL3 (361 aa).

The disordered stretch occupies residues 339–361 (RPPKKKPPVQRPQITYVSVESKQ). A compositionally biased stretch (polar residues) spans 350 to 361 (PQITYVSVESKQ).

The protein belongs to the universal ribosomal protein uL3 family. As to quaternary structure, part of the 50S ribosomal subunit. Forms a cluster with proteins L14 and L24e.

In terms of biological role, one of the primary rRNA binding proteins, it binds directly near the 3'-end of the 23S rRNA, where it nucleates assembly of the 50S subunit. The sequence is that of Large ribosomal subunit protein uL3 from Pyrococcus abyssi (strain GE5 / Orsay).